The chain runs to 774 residues: MRNCRVLLVLVLSLVIVLNVVRASDESKVHIVYLGEKQHDDPEFVSESHHQMLSSLLGSKVDAHESMVYSYRHGFSGFAAKLTESQAKKLADSPEVVHVMADSFYELATTRTWDYLGLSVANPNNLLNDTNMGDQVIIGFIDTGVWPESESFNDNGVGPIPSHWKGGCESGEKFISTNCNRKLIGAKYFINGFLAENEGFNTTESRDYISARDFIGHGTHTASIAGGSFVPNISYKGLAGGNLRGGAPRARIAIYKACWYVDQLGAVACSSSDILKAMDESMHDGVDVLSLSLGAQIPLYPETDLRDRIATGAFHAVAKGIIVVCAGGNSGPAAQTVLNTAPWIITVAATTLDRSFPTPITLGNRKVILGQALYTGQELGFTSLVYPENAGFTNETFSGVCERLNLNPNRTMAGKVVLCFTTNTLFTAVSRAASYVKAAGGLGVIIARNPGYNLTPCRDDFPCVAIDYELGTDVLLYIRSTRSPVVKIQPSRTLVGQPVGTKVATFSSRGPNSISPAILKPDIGAPGVSILAATSPDSNSSVGGFDILAGTSMAAPVVAGVVALLKALHPNWSPAAFRSAIVTTAWRTDPFGEQIFAEGSSRKVADPFDYGGGIVNPEKAADPGLIYDMGPRDYILYLCSAGYNDSSITQLVGNVTVCSTPKTSVLDVNLPSITIPDLKDEVTLTRTVTNVGTVDSVYKVVVEPPLGIQVVVAPETLVFNSKTKNVSFTVRVSTTHKINTGFYFGNLIWTDSMHNVTIPVSVRTQILQNYYDEN.

Positions 1-23 (MRNCRVLLVLVLSLVIVLNVVRA) are cleaved as a signal peptide. The propeptide at 24 to 108 (SDESKVHIVY…VMADSFYELA (85 aa)) is removed in mature form. The region spanning 29–108 (VHIVYLGEKQ…VMADSFYELA (80 aa)) is the Inhibitor I9 domain. One can recognise a Peptidase S8 domain in the interval 112–621 (TWDYLGLSVA…GGIVNPEKAA (510 aa)). N-linked (GlcNAc...) asparagine glycosylation is present at Asn128. The active-site Charge relay system is the Asp142. Asn201 carries an N-linked (GlcNAc...) asparagine glycan. The active-site Charge relay system is His217. Asn232, Asn394, Asn409, and Asn539 each carry an N-linked (GlcNAc...) asparagine glycan. Residues 383 to 478 (SLVYPENAGF…ELGTDVLLYI (96 aa)) enclose the PA domain. The active-site Charge relay system is the Ser552. N-linked (GlcNAc...) asparagine glycans are attached at residues Asn644, Asn654, Asn725, and Asn755.

This sequence belongs to the peptidase S8 family. As to expression, expressed in roots, leaves, stems, flower buds, developing siliques and mature seeds.

The protein localises to the secreted. It is found in the cell wall. In terms of biological role, serine protease that cleaves the pectin methylesterase 17 (PME17) protein to release the PME17 mature form in the apoplasm. This is Subtilisin-like protease SBT3.5 from Arabidopsis thaliana (Mouse-ear cress).